We begin with the raw amino-acid sequence, 411 residues long: Peptidase T (411 aa).

His-79 provides a ligand contact to Zn(2+). Residue Asp-81 is part of the active site. Asp-142 is a binding site for Zn(2+). Residue Glu-176 is the Proton acceptor of the active site. Zn(2+) contacts are provided by Glu-177, Asp-199, and His-381.

This sequence belongs to the peptidase M20B family. Zn(2+) is required as a cofactor.

The protein localises to the cytoplasm. The catalysed reaction is Release of the N-terminal residue from a tripeptide.. Its function is as follows. Cleaves the N-terminal amino acid of tripeptides. The protein is Peptidase T of Exiguobacterium sibiricum (strain DSM 17290 / CCUG 55495 / CIP 109462 / JCM 13490 / 255-15).